The chain runs to 100 residues: UPF0213 protein YhbQ (100 aa).

The region spanning 2-77 (TPWFLYLIRT…KQLTKRQKER (76 aa)) is the GIY-YIG domain.

Belongs to the UPF0213 family.

This Escherichia fergusonii (strain ATCC 35469 / DSM 13698 / CCUG 18766 / IAM 14443 / JCM 21226 / LMG 7866 / NBRC 102419 / NCTC 12128 / CDC 0568-73) protein is UPF0213 protein YhbQ.